Reading from the N-terminus, the 231-residue chain is Claudin-10 (231 aa).

Residues 1 to 21 form a helical membrane-spanning segment; that stretch reads MASTASEIIAFMVSISGWVLV. Topologically, residues 22–80 are extracellular; it reads SSTLPTDYWKVSTIDGTVITTATYWANLWKTCVTDSTGVSNCKDFPSMLALDGYIQACR. A helical transmembrane segment spans residues 81–101; that stretch reads GLMIAAVSLGFFGSIFALIGM. Residues 102-115 are Cytoplasmic-facing; the sequence is KCTKVGGSDKAKAK. Residues 116–136 traverse the membrane as a helical segment; sequence IACLAGIVFILSGLCSMTGCS. Topologically, residues 137–160 are extracellular; the sequence is LYANKITTEFFDPLFVEQKYELGA. Residues 161–181 form a helical membrane-spanning segment; sequence ALFIGWAGASLCLIGGVIFCF. Residues 182–231 lie on the Cytoplasmic side of the membrane; that stretch reads SISDNNKAPRMGYTYNGATSVMSSRTKYHGREGDLKTPNPSKQFDKNAYV.

This sequence belongs to the claudin family. In terms of assembly, can form homodimers both in trans (interaction between CLDN10 molecules in opposing membranes) and in cis (interaction between CLDN10 molecules within one membrane). Interacts with CLDN19.

It is found in the cell junction. The protein resides in the tight junction. Its subcellular location is the cell membrane. The catalysed reaction is Na(+)(in) = Na(+)(out). It catalyses the reaction Li(+)(in) = Li(+)(out). The enzyme catalyses K(+)(in) = K(+)(out). It carries out the reaction Rb(+)(in) = Rb(+)(out). The catalysed reaction is Cs(+)(in) = Cs(+)(out). It catalyses the reaction NH4(+)(in) = NH4(+)(out). The enzyme catalyses methylamine(out) = methylamine(in). It carries out the reaction Mg(2+)(in) = Mg(2+)(out). The catalysed reaction is Ca(2+)(in) = Ca(2+)(out). It catalyses the reaction Sr(2+)(in) = Sr(2+)(out). The enzyme catalyses chloride(in) = chloride(out). It carries out the reaction nitrate(in) = nitrate(out). Functionally, forms paracellular channels: polymerizes in tight junction strands with cation- and anion-selective channels through the strands, conveying epithelial permeability in a process known as paracellular tight junction permeability. In sweat glands and in the thick ascending limb (TAL) of Henle's loop in kidney, it controls paracellular sodium permeability which is essential for proper sweat production and renal function. In renal proximal tubules, it conveys selective chloride over hydrogencarbonate anion permeability which is required for renal chloride reabsorption and salt homeostasis. This Bos taurus (Bovine) protein is Claudin-10 (CLDN10).